A 43-amino-acid chain; its full sequence is Potassium channel toxin gamma-KTx 4.11 (43 aa).

Intrachain disulfides connect Cys5-Cys23, Cys11-Cys34, Cys20-Cys39, and Cys24-Cys41.

It belongs to the ergtoxin family. Gamma-KTx 4 subfamily. Expressed by the venom gland.

The protein localises to the secreted. Reversibly blocks Kv11/ERG potassium channels. The chain is Potassium channel toxin gamma-KTx 4.11 from Centruroides noxius (Mexican scorpion).